A 427-amino-acid polypeptide reads, in one-letter code: MTKLLAYFPSPPQGVWHLGPVPIRAYALFIIAGIVAALLIGDRRWEARGGERGVIYDIALWTVPFGLVGGRLYHLATDWRTYWGPGGAGFGAAVRIWDGGLGIWGAVALGAVGAWIGCRRHGIPLPAFADALAPGIILAQAIGRLGNYFNQELYGRETTLPWGLEIFYRRDPSGYIDPHSLDGVSTGQVALVVQPTFLYELLWNLLIFVALLYADRRLTLGHGRLFALYVAGYCVGRFCVELLRDDTATHIAGIRINSFTSTFVFIGAVVYLMAAPKGREDPESLRGNQYVEEEPAEPEPATVAATTEAATEGVAAPADGAEAAGADATAQRPEESAEPDVEKPESEETEAAEEASEPEAEEPEAPEAEEPEEPETEEPEADSGEEPEEESGEAPEQLVAEEPEPAPQQPETKRRWGARLRERLSGR.

4 helical membrane-spanning segments follow: residues 21–41 (VPIR…LLIG), 53–73 (GVIY…GRLY), 96–116 (IWDG…GAWI), and 122–142 (GIPL…AQAI). R144 lines the a 1,2-diacyl-sn-glycero-3-phospho-(1'-sn-glycerol) pocket. 2 helical membrane-spanning segments follow: residues 189 to 209 (VALV…LIFV) and 256 to 276 (INSF…MAAP). The interval 280–427 (EDPESLRGNQ…ARLRERLSGR (148 aa)) is disordered. Low complexity predominate over residues 299-330 (EPATVAATTEAATEGVAAPADGAEAAGADATA). Positions 332-346 (RPEESAEPDVEKPES) are enriched in basic and acidic residues. A compositionally biased stretch (acidic residues) spans 347–404 (EETEAAEEASEPEAEEPEAPEAEEPEEPETEEPEADSGEEPEEESGEAPEQLVAEEPE). Residues 411–427 (ETKRRWGARLRERLSGR) show a composition bias toward basic and acidic residues.

Belongs to the Lgt family.

It is found in the cell membrane. The catalysed reaction is L-cysteinyl-[prolipoprotein] + a 1,2-diacyl-sn-glycero-3-phospho-(1'-sn-glycerol) = an S-1,2-diacyl-sn-glyceryl-L-cysteinyl-[prolipoprotein] + sn-glycerol 1-phosphate + H(+). It participates in protein modification; lipoprotein biosynthesis (diacylglyceryl transfer). In terms of biological role, catalyzes the transfer of the diacylglyceryl group from phosphatidylglycerol to the sulfhydryl group of the N-terminal cysteine of a prolipoprotein, the first step in the formation of mature lipoproteins. This Mycolicibacterium paratuberculosis (strain ATCC BAA-968 / K-10) (Mycobacterium paratuberculosis) protein is Phosphatidylglycerol--prolipoprotein diacylglyceryl transferase.